Consider the following 360-residue polypeptide: Luc7-like protein (360 aa).

Positions 143–206 (KEQNSKITEL…QEKNENKRMS (64 aa)) form a coiled coil. Residues 255-360 (LGRTDFYNAP…DDRRKRDRNY (106 aa)) form a disordered region. Over residues 269 to 293 (DSYRDDRRSSSSSYHDIDGRRDHRY) the composition is skewed to basic and acidic residues. The span at 312–321 (NNGRGSSRDN) shows a compositional bias: low complexity. The segment covering 329–360 (RDYRNDHGKDYDRKRERDYYNDDDRRKRDRNY) has biased composition (basic and acidic residues).

The protein belongs to the Luc7 family.

Its subcellular location is the nucleus. May play a role in RNA splicing. This Dictyostelium discoideum (Social amoeba) protein is Luc7-like protein (crop).